A 502-amino-acid chain; its full sequence is UPF0371 protein CLK_3516 (502 aa).

It belongs to the UPF0371 family.

The sequence is that of UPF0371 protein CLK_3516 from Clostridium botulinum (strain Loch Maree / Type A3).